We begin with the raw amino-acid sequence, 450 residues long: UDP-N-acetylmuramoylalanine--D-glutamate ligase (450 aa).

An ATP-binding site is contributed by 119–125; it reads GSNGKTT.

This sequence belongs to the MurCDEF family.

It localises to the cytoplasm. It carries out the reaction UDP-N-acetyl-alpha-D-muramoyl-L-alanine + D-glutamate + ATP = UDP-N-acetyl-alpha-D-muramoyl-L-alanyl-D-glutamate + ADP + phosphate + H(+). Its pathway is cell wall biogenesis; peptidoglycan biosynthesis. Functionally, cell wall formation. Catalyzes the addition of glutamate to the nucleotide precursor UDP-N-acetylmuramoyl-L-alanine (UMA). The polypeptide is UDP-N-acetylmuramoylalanine--D-glutamate ligase (Bacillus thuringiensis (strain Al Hakam)).